The primary structure comprises 254 residues: Ribosomal RNA large subunit methyltransferase E (254 aa).

The span at 1–18 shows a compositional bias: gly residues; sequence MTNSGKTGGKSGKGGTGG. Residues 1–26 form a disordered region; sequence MTNSGKTGGKSGKGGTGGARALKVRV. S-adenosyl-L-methionine is bound by residues Gly-89, Trp-91, Asp-119, Asp-135, and Asp-159. The active-site Proton acceptor is the Lys-199.

This sequence belongs to the class I-like SAM-binding methyltransferase superfamily. RNA methyltransferase RlmE family.

The protein localises to the cytoplasm. It catalyses the reaction uridine(2552) in 23S rRNA + S-adenosyl-L-methionine = 2'-O-methyluridine(2552) in 23S rRNA + S-adenosyl-L-homocysteine + H(+). Its function is as follows. Specifically methylates the uridine in position 2552 of 23S rRNA at the 2'-O position of the ribose in the fully assembled 50S ribosomal subunit. The polypeptide is Ribosomal RNA large subunit methyltransferase E (Parvibaculum lavamentivorans (strain DS-1 / DSM 13023 / NCIMB 13966)).